The following is a 369-amino-acid chain: Protein-glutamate methylesterase/protein-glutamine glutaminase 1 (369 aa).

Residues 11 to 128 (RVLIVDDSAA…DLERQEASIR (118 aa)) form the Response regulatory domain. Asp-62 carries the 4-aspartylphosphate modification. The disordered stretch occupies residues 136–168 (ATETTRRRSQPEPRPLAPGPKLTADEILPARPP). Residues 170–358 (PVPETMPVVC…LDRLAARIME (189 aa)) enclose the CheB-type methylesterase domain. Active-site residues include Ser-183, His-209, and Asp-305.

Belongs to the CheB family. Phosphorylated by CheA. Phosphorylation of the N-terminal regulatory domain activates the methylesterase activity.

It is found in the cytoplasm. It catalyses the reaction [protein]-L-glutamate 5-O-methyl ester + H2O = L-glutamyl-[protein] + methanol + H(+). It carries out the reaction L-glutaminyl-[protein] + H2O = L-glutamyl-[protein] + NH4(+). Functionally, involved in chemotaxis. Part of a chemotaxis signal transduction system that modulates chemotaxis in response to various stimuli. Catalyzes the demethylation of specific methylglutamate residues introduced into the chemoreceptors (methyl-accepting chemotaxis proteins or MCP) by CheR. Also mediates the irreversible deamidation of specific glutamine residues to glutamic acid. The polypeptide is Protein-glutamate methylesterase/protein-glutamine glutaminase 1 (Cereibacter sphaeroides (strain ATCC 17023 / DSM 158 / JCM 6121 / CCUG 31486 / LMG 2827 / NBRC 12203 / NCIMB 8253 / ATH 2.4.1.) (Rhodobacter sphaeroides)).